Consider the following 115-residue polypeptide: MARTPGALLLAPLLLLQLATPALVYQDYQYLGQQGEGDSWEQLRLQHLKEVEDSILGPWGKWRCLCDLGKQERSREVVGTAPGPVFMDPEKLIQLRPCRQRDCPSCKPFDCDWRL.

The N-terminal stretch at 1-21 (MARTPGALLLAPLLLLQLATP) is a signal peptide. Positions 53-104 (DSILGPWGKWRCLCDLGKQERSREVVGTAPGPVFMDPEKLIQLRPCRQRDCP) constitute a TSP type-1 domain.

This chain is Thrombospondin type-1 domain-containing protein 8, found in Homo sapiens (Human).